Reading from the N-terminus, the 190-residue chain is Ribose 1,5-bisphosphate phosphokinase PhnN (190 aa).

11–18 (GPSGSGKD) provides a ligand contact to ATP.

This sequence belongs to the ribose 1,5-bisphosphokinase family.

It catalyses the reaction alpha-D-ribose 1,5-bisphosphate + ATP = 5-phospho-alpha-D-ribose 1-diphosphate + ADP. It functions in the pathway metabolic intermediate biosynthesis; 5-phospho-alpha-D-ribose 1-diphosphate biosynthesis; 5-phospho-alpha-D-ribose 1-diphosphate from D-ribose 5-phosphate (route II): step 3/3. In terms of biological role, catalyzes the phosphorylation of ribose 1,5-bisphosphate to 5-phospho-D-ribosyl alpha-1-diphosphate (PRPP). The chain is Ribose 1,5-bisphosphate phosphokinase PhnN from Thiobacillus denitrificans (strain ATCC 25259 / T1).